Here is a 203-residue protein sequence, read N- to C-terminus: Nascent polypeptide-associated complex subunit alpha (203 aa).

Over residues Met1–Val19 the composition is skewed to basic and acidic residues. The disordered stretch occupies residues Met1–His45. Positions Asp21–Glu32 are enriched in acidic residues. An NAC-A/B domain is found at Ser46–Ala111. A disordered region spans residues Gln118 to Lys167. The span at Ala125–Glu150 shows a compositional bias: basic and acidic residues. Over residues Glu151 to Gly163 the composition is skewed to acidic residues. The UBA domain occupies Leu164–Ile203.

The protein belongs to the NAC-alpha family. In terms of assembly, part of the nascent polypeptide-associated complex (NAC), consisting of egd2 and egd1. NAC associates with ribosomes via egd1.

The protein resides in the cytoplasm. Its subcellular location is the nucleus. Its function is as follows. Component of the nascent polypeptide-associated complex (NAC), a dynamic component of the ribosomal exit tunnel, protecting the emerging polypeptides from interaction with other cytoplasmic proteins to ensure appropriate nascent protein targeting. The NAC complex also promotes mitochondrial protein import by enhancing productive ribosome interactions with the outer mitochondrial membrane and blocks the inappropriate interaction of ribosomes translating non-secretory nascent polypeptides with translocation sites in the membrane of the endoplasmic reticulum. Egd2 may also be involved in transcription regulation. In Emericella nidulans (strain FGSC A4 / ATCC 38163 / CBS 112.46 / NRRL 194 / M139) (Aspergillus nidulans), this protein is Nascent polypeptide-associated complex subunit alpha (egd2).